A 794-amino-acid chain; its full sequence is MTDTQAAAERIAQLRTELDTHNYRYYVLDEPSIPDAEYDRLFRELQALEAEYPQLLTPDSPTQRVSGTPASAFGEVRHEIPMLSLGNAFEEQDLLDFDRRVREGLADLLPGGDLLGGGAEVEYSCEPKLDGLAVSLLYERGQLVRGATRGDGSTGEDITSNVRTIRNVPLKLHGEGWPEILEVRGEVFMSKAGFEALNAKAVETGGKTFANPRNAAAGSLRQLDSKITASRPLEFCAYGFGQVSGTLPDTQVGILEAFRGWGIPISRELRLVKGAQACRDYYDDIGRRRDALAYEIDGVVFKVNRIAFQRELGFRAREPRWAIAHKFPAREELTELLGVEFQVGRTGAVTPVARLKPVQVAGVTVSNATLHNMDEVARLGLRIGDTVVIRRAGDVIPQVMQVVLERRPADAQAIEVPEHCPVCGSAVERTQLVKRSKGKESISEGAIYRCVGRLSCQAQLKQAIIHFVSRRAMDIDGLGDKIVEQLVDRGLVASPADLYTLTYEQVFELEGFAELSTNNLLTAIADSRKPSLARFIFALGIPDVGEETAKLLARSLGSLERIGKALPEVLTYLPDVGAEVAYEIHNFFADEHNRQVIAQLRDAEHGVQLQEEGEVAAEFAACASLAGFIDKLNIPFIAATGAEKLASRFGSLDGIIRADWLDLRQVERLPERAAKSLRDFFDEPANVQRALAIEAQLREFGMHWQSERKAVEGLPLAGQTWVLTGTLEAMSRDVAKDKLEGLGAKVAGSVSAKTHCVVAGPGAGSKLAKANELGVKVLDEDGLLKLFDEHGVAR.

Residues 35 to 39 (DAEYD), 84 to 85 (SL), and Glu-126 each bind NAD(+). Lys-128 functions as the N6-AMP-lysine intermediate in the catalytic mechanism. Positions 149, 186, 302, and 326 each coordinate NAD(+). Zn(2+) contacts are provided by Cys-420, Cys-423, Cys-450, and Cys-456. The region spanning 711–794 (VEGLPLAGQT…KLFDEHGVAR (84 aa)) is the BRCT domain.

The protein belongs to the NAD-dependent DNA ligase family. LigA subfamily. Mg(2+) serves as cofactor. The cofactor is Mn(2+).

The catalysed reaction is NAD(+) + (deoxyribonucleotide)n-3'-hydroxyl + 5'-phospho-(deoxyribonucleotide)m = (deoxyribonucleotide)n+m + AMP + beta-nicotinamide D-nucleotide.. In terms of biological role, DNA ligase that catalyzes the formation of phosphodiester linkages between 5'-phosphoryl and 3'-hydroxyl groups in double-stranded DNA using NAD as a coenzyme and as the energy source for the reaction. It is essential for DNA replication and repair of damaged DNA. This chain is DNA ligase, found in Pseudomonas aeruginosa (strain LESB58).